The chain runs to 138 residues: MFTDQQKIGAMLSAMGLFFGFLGVLLFLDRNLLALGNLLLVSGIVLILGLQKTTKFFAQKKKIKGTILFFFGIVVLLVTRWTFVGMVIEIFGFVNLFGDAFPIVISILRKLPIIGNILNHPLVNRLLQKADSGNELPF.

Residues Met-1–Lys-7 are Cytoplasmic-facing. A helical membrane pass occupies residues Ile-8 to Leu-28. Residues Asp-29–Arg-30 lie on the Lumenal side of the membrane. The chain crosses the membrane as a helical span at residues Asn-31–Gln-51. At Lys-52–Lys-62 the chain is on the cytoplasmic side. A helical membrane pass occupies residues Ile-63–Thr-82. The Lumenal segment spans residues Phe-83–Val-87. A helical transmembrane segment spans residues Ile-88–Leu-108. Topologically, residues Arg-109–Phe-138 are cytoplasmic.

Belongs to the GOT1 family.

It is found in the golgi apparatus membrane. In terms of biological role, may be involved in fusion of ER-derived transport vesicles with the Golgi complex. This Dictyostelium discoideum (Social amoeba) protein is Protein transport protein got1 homolog (golt1).